Here is a 539-residue protein sequence, read N- to C-terminus: Eukaryotic translation initiation factor 3 subunit L (539 aa).

Positions 302 to 514 (TFSSILLYIQ…IHIADTKVSH (213 aa)) constitute a PCI domain.

It belongs to the eIF-3 subunit L family. Component of the eukaryotic translation initiation factor 3 (eIF-3) complex.

Its subcellular location is the cytoplasm. Its function is as follows. Component of the eukaryotic translation initiation factor 3 (eIF-3) complex, which is involved in protein synthesis of a specialized repertoire of mRNAs and, together with other initiation factors, stimulates binding of mRNA and methionyl-tRNAi to the 40S ribosome. The eIF-3 complex specifically targets and initiates translation of a subset of mRNAs involved in cell proliferation. The sequence is that of Eukaryotic translation initiation factor 3 subunit L from Anopheles gambiae (African malaria mosquito).